Reading from the N-terminus, the 480-residue chain is uncharacterized protein (480 aa).

The zn(2)-C6 fungal-type DNA-binding region spans cysteine 16–cysteine 46. Residues serine 298 to serine 307 are compositionally biased toward low complexity. A disordered region spans residues serine 298 to serine 325. Residues threonine 308–serine 325 show a composition bias toward polar residues.

Its subcellular location is the cytoplasm. The protein localises to the nucleus. This is an uncharacterized protein from Schizosaccharomyces pombe (strain 972 / ATCC 24843) (Fission yeast).